The chain runs to 944 residues: Leucine--tRNA ligase 2 (944 aa).

A 'HIGH' region motif is present at residues 36-46 (PYPNSPWHIGH). Positions 623 to 627 (KMSKS) match the 'KMSKS' region motif. ATP is bound at residue lysine 626.

The protein belongs to the class-I aminoacyl-tRNA synthetase family.

It is found in the cytoplasm. It carries out the reaction tRNA(Leu) + L-leucine + ATP = L-leucyl-tRNA(Leu) + AMP + diphosphate. This chain is Leucine--tRNA ligase 2, found in Saccharolobus solfataricus (strain ATCC 35092 / DSM 1617 / JCM 11322 / P2) (Sulfolobus solfataricus).